Consider the following 148-residue polypeptide: Ubiquitin-conjugating enzyme E2 29 (148 aa).

Residues 1 to 147 (MATRRILKEL…ARSWTQKYAL (147 aa)) enclose the UBC core domain. Residue C85 is the Glycyl thioester intermediate of the active site.

Belongs to the ubiquitin-conjugating enzyme family.

The enzyme catalyses S-ubiquitinyl-[E1 ubiquitin-activating enzyme]-L-cysteine + [E2 ubiquitin-conjugating enzyme]-L-cysteine = [E1 ubiquitin-activating enzyme]-L-cysteine + S-ubiquitinyl-[E2 ubiquitin-conjugating enzyme]-L-cysteine.. It participates in protein modification; protein ubiquitination. Accepts the ubiquitin from the E1 complex and catalyzes its covalent attachment to other proteins. This chain is Ubiquitin-conjugating enzyme E2 29 (UBC29), found in Arabidopsis thaliana (Mouse-ear cress).